Reading from the N-terminus, the 410-residue chain is Lissencephaly-1 homolog A (410 aa).

Positions 7–39 (QRDELNRAIADYLRSNGYEEAYSTFKKEAELDM) constitute a LisH domain. Positions 56–82 (TSVIRLQKKVMELESKLNEAKEEITLG) form a coiled coil. 7 WD repeats span residues 106 to 147 (GHRS…RTLK), 148 to 187 (GHTD…CIRT), 190 to 229 (GHDH…CVKT), 232 to 271 (GHRE…CKAE), 274 to 333 (EHEH…CLMT), 336 to 375 (GHDN…CMKT), and 378 to 410 (AHEH…WECR).

Belongs to the WD repeat LIS1/nudF family. As to quaternary structure, can self-associate. Component of the cytosolic PAF-AH (I) heterotetrameric enzyme, which is composed of PAFAH1B1 (beta), PAFAH1B2 (alpha2) and PAFAH1B3 (alpha1) subunits. The catalytic activity of the enzyme resides in the alpha1 (PAFAH1B3) and alpha2 (PAFAH1B2) subunits, whereas the beta subunit (PAFAH1B1) has regulatory activity. Trimer formation is not essential for the catalytic activity. Interacts with dynein, dynactin, nde1 and ndel1.

The protein resides in the cytoplasm. Its subcellular location is the cytoskeleton. It is found in the microtubule organizing center. The protein localises to the centrosome. Functionally, regulatory subunit (beta subunit) of the cytosolic type I platelet-activating factor (PAF) acetylhydrolase (PAF-AH (I)), an enzyme that catalyzes the hydrolyze of the acetyl group at the sn-2 position of PAF and its analogs and participates in PAF inactivation. Regulates the PAF-AH (I) activity in a catalytic dimer composition-dependent manner. Positively regulates the activity of the minus-end directed microtubule motor protein dynein. May enhance dynein-mediated microtubule sliding by targeting dynein to the microtubule plus end. Required for several dynein- and microtubule-dependent processes such as the maintenance of Golgi integrity, the peripheral transport of microtubule fragments and the coupling of the nucleus and centrosome. May be required for proliferation of neuronal precursors and neuronal migration. The chain is Lissencephaly-1 homolog A (pafah1b1-1) from Salmo salar (Atlantic salmon).